The following is a 309-amino-acid chain: MKIVFMGTPDFAVPSFRKLIEEHEVKAVLTQPDKPKGRGKKLAYSPVKEEALKYDIPVYQPTKLKDDKEIIEKLKEINPDFIIVVAFGQILTKEVLDIPKYGCINLHASLLPMYRGAAPLNWVIIKGEKKSGNTTMLMDVGLDTGDMLLKEEVEIHEDMTTGELHDILMISGGELLLKTIEGLCSGSIKPVKQEGETFYAKMLDKELAHINWTEDAYDIHNLVRGLNPWPIAYTEYKGERMKLYKTKVLYKEVSNKPGTIIEVNKEGVKVACGKNVLIIEKVQFPNGKPLTIEQYINGHSIEKDIILGE.

Residue serine 109–proline 112 coordinates (6S)-5,6,7,8-tetrahydrofolate.

The protein belongs to the Fmt family.

It carries out the reaction L-methionyl-tRNA(fMet) + (6R)-10-formyltetrahydrofolate = N-formyl-L-methionyl-tRNA(fMet) + (6S)-5,6,7,8-tetrahydrofolate + H(+). Attaches a formyl group to the free amino group of methionyl-tRNA(fMet). The formyl group appears to play a dual role in the initiator identity of N-formylmethionyl-tRNA by promoting its recognition by IF2 and preventing the misappropriation of this tRNA by the elongation apparatus. The polypeptide is Methionyl-tRNA formyltransferase (Clostridium botulinum (strain Alaska E43 / Type E3)).